The sequence spans 273 residues: Epidermal growth factor-like protein 7 (273 aa).

A signal peptide spans 1–23 (MRGSQEVLLMWLLVLAVGGTEHA). Residues 27 to 104 (GRRVCAVRAH…TSGLPGACGA (78 aa)) form the EMI domain. 9 disulfide bridges follow: cysteine 31/cysteine 89, cysteine 56/cysteine 62, cysteine 88/cysteine 102, cysteine 107/cysteine 117, cysteine 111/cysteine 123, cysteine 125/cysteine 134, cysteine 141/cysteine 152, cysteine 148/cysteine 161, and cysteine 163/cysteine 176. One can recognise an EGF-like 1 domain in the interval 103–135 (GAAICQPPCRNGGSCVQPGRCRCPAGWRGDTCQ). A Cell attachment site motif is present at residues 130–132 (RGD). Residues 137 to 177 (DVDECSARRGGCPQRCVNTAGSYWCQCWEGHSLSADGTLCV) enclose the EGF-like 2; calcium-binding domain. The stretch at 192–219 (VDSAMKEEVQRLQSRVDLLEEKLQLVLA) forms a coiled coil.

As to quaternary structure, interacts with ITGAV/ITGB3 in an RGD-dependent manner, increasing endothelial cell's motility.

The protein localises to the secreted. It is found in the extracellular space. In terms of biological role, regulates vascular tubulogenesis in vivo. Inhibits platelet-derived growth factor (PDGF)-BB-induced smooth muscle cell migration and promotes endothelial cell adhesion to the extracellular matrix and angiogenesis. In Homo sapiens (Human), this protein is Epidermal growth factor-like protein 7 (EGFL7).